Here is a 152-residue protein sequence, read N- to C-terminus: Large ribosomal subunit protein uL15 (152 aa).

A disordered region spans residues 1–66; it reads MRSNPMTLRL…GFEGGQTPMQ (66 aa). Positions 28–38 are enriched in gly residues; it reads RGIGSGLGKTA. A compositionally biased stretch (basic residues) spans 39–52; the sequence is GRGHKGSFARKGGG.

Belongs to the universal ribosomal protein uL15 family. Part of the 50S ribosomal subunit.

In terms of biological role, binds to the 23S rRNA. The sequence is that of Large ribosomal subunit protein uL15 from Xanthomonas oryzae pv. oryzae (strain KACC10331 / KXO85).